Consider the following 458-residue polypeptide: Ammonium transporter Rh type B (458 aa).

Residues 1-13 (MAGSPSRAAGRRL) are Cytoplasmic-facing. Residues 14 to 34 (QLPLLCLFLQGATAVLFAVFV) form a helical membrane-spanning segment. At 35 to 61 (RYNHKTDAALWHRGNHSNADNEFYFRY) the chain is on the extracellular side. Asparagine 49 carries an N-linked (GlcNAc...) asparagine glycan. The chain crosses the membrane as a helical span at residues 62 to 82 (PSFQDVHAMVFVGFGFLMVFL). Over 83–86 (QRYG) the chain is Cytoplasmic. A helical transmembrane segment spans residues 87–107 (FSSVGFTFLLAAFALQWSTLV). Residues 108 to 124 (QGFLHSFHSGHIHVGVE) are Extracellular-facing. Residues 125 to 145 (SMINADFCAGAVLISFGAVLG) traverse the membrane as a helical segment. The Cytoplasmic portion of the chain corresponds to 146-149 (KTGP). A helical membrane pass occupies residues 150 to 170 (AQLLLMALLEVVLFGINEFVL). At 171–178 (LHLLGVRD) the chain is on the extracellular side. Residues 179-201 (AGGSMTIHTFGAYFGLVLSRVLY) traverse the membrane as a helical segment. At 202–219 (RPQLEKSKHRQGSVYHSD) the chain is on the cytoplasmic side. The chain crosses the membrane as a helical span at residues 220–240 (LFAMIGTIFLWIFWPSFNSAL). The Extracellular portion of the chain corresponds to 241 to 251 (TALGAGQHRTA). A helical membrane pass occupies residues 252 to 272 (LNTYYSLAASTLGTFALSALV). The Cytoplasmic segment spans residues 273 to 282 (GEDGRLDMVH). A helical membrane pass occupies residues 283 to 303 (IQNAALAGGVVVGTSSEMMLT). Position 304 (proline 304) is a topological domain, extracellular. The chain crosses the membrane as a helical span at residues 305–325 (FGALAAGFLAGTVSTLGYKFF). At 326–346 (TPILESKFKVQDTCGVHNLHG) the chain is on the cytoplasmic side. A helical transmembrane segment spans residues 347-367 (MPGVLGALLGVLVAGLATHEA). Over 368–393 (YGDGLESVFPLIAEGQRSATSQAMLQ) the chain is Extracellular. The chain crosses the membrane as a helical span at residues 394 to 414 (LFGLFVTLMFASVGGGLGGLL). The Cytoplasmic segment spans residues 415–458 (LKLPFLDSPPDSQCYEDQVHWQVPGEHEDEAQRPLRVEEADTQA). Positions 416–424 (KLPFLDSPP) are interaction with ANK3. The Basolateral sorting signal signature appears at 429–432 (YEDQ). The tract at residues 439-458 (GEHEDEAQRPLRVEEADTQA) is disordered. A compositionally biased stretch (basic and acidic residues) spans 444–458 (EAQRPLRVEEADTQA).

Belongs to the ammonium transporter (TC 2.A.49) family. Rh subfamily. As to quaternary structure, interacts (via C-terminus) with ANK2 and ANK3; required for targeting to the basolateral membrane. Post-translationally, N-glycosylated.

It localises to the cell membrane. The protein resides in the basolateral cell membrane. The catalysed reaction is NH4(+)(in) = NH4(+)(out). It carries out the reaction methylamine(out) = methylamine(in). It catalyses the reaction CO2(out) = CO2(in). In terms of biological role, ammonium transporter involved in the maintenance of acid-base homeostasis. Transports ammonium and its related derivative methylammonium across the basolateral plasma membrane of epithelial cells likely contributing to renal transepithelial ammonia transport and ammonia metabolism. May transport either NH4(+) or NH3 ammonia species predominantly mediating an electrogenic NH4(+) transport. May act as a CO2 channel providing for renal acid secretion. The chain is Ammonium transporter Rh type B (RHBG) from Macaca mulatta (Rhesus macaque).